The primary structure comprises 107 residues: Large ribosomal subunit protein P1 (107 aa).

A compositionally biased stretch (low complexity) spans 68 to 82 (PATAGAPAAAGAAAP). A disordered region spans residues 68-107 (PATAGAPAAAGAAAPAEEKKEEKEEEKEESDEDMGFGLFD). The segment covering 90–101 (KEEEKEESDEDM) has biased composition (acidic residues).

Belongs to the eukaryotic ribosomal protein P1/P2 family. P1 and P2 exist as dimers at the large ribosomal subunit.

Its subcellular location is the cytoplasm. Functionally, plays an important role in the elongation step of protein synthesis. This is Large ribosomal subunit protein P1 from Penicillium brevicompactum.